A 1243-amino-acid chain; its full sequence is ATP-dependent helicase/nuclease subunit A (1243 aa).

Residues 2 to 475 (VNWTKEQEEA…IDLARNFRSR (474 aa)) enclose the UvrD-like helicase ATP-binding domain. 23-30 (AAAGSGKT) contributes to the ATP binding site. The UvrD-like helicase C-terminal domain occupies 502–803 (AAELIYGNKM…RIMTIHKSKG (302 aa)).

Belongs to the helicase family. AddA subfamily. Heterodimer of AddA and AddB/RexB. The cofactor is Mg(2+).

The enzyme catalyses Couples ATP hydrolysis with the unwinding of duplex DNA by translocating in the 3'-5' direction.. The catalysed reaction is ATP + H2O = ADP + phosphate + H(+). Functionally, the heterodimer acts as both an ATP-dependent DNA helicase and an ATP-dependent, dual-direction single-stranded exonuclease. Recognizes the chi site generating a DNA molecule suitable for the initiation of homologous recombination. The AddA nuclease domain is required for chi fragment generation; this subunit has the helicase and 3' -&gt; 5' nuclease activities. In Oceanobacillus iheyensis (strain DSM 14371 / CIP 107618 / JCM 11309 / KCTC 3954 / HTE831), this protein is ATP-dependent helicase/nuclease subunit A.